The sequence spans 79 residues: Protein NOI4 (79 aa).

The segment at Lys-31–Trp-68 is disordered. Position 44 is a phosphoserine (Ser-44).

It belongs to the RIN4 family. Post-translationally, proteolytic cleaved by P.syringae pv tomato AvrRpt2 after Gly-12; this cleavage is critical for subsequent proteasome-dependent elimination.

This chain is Protein NOI4, found in Arabidopsis thaliana (Mouse-ear cress).